A 117-amino-acid chain; its full sequence is Acylphosphatase (117 aa).

The 87-residue stretch at 31–117 folds into the Acylphosphatase-like domain; it reads RWRWIIQGQV…RGDDWFEVRY (87 aa). Active-site residues include arginine 46 and asparagine 64.

Belongs to the acylphosphatase family.

The catalysed reaction is an acyl phosphate + H2O = a carboxylate + phosphate + H(+). The chain is Acylphosphatase (acyP) from Synechococcus sp. (strain CC9902).